The chain runs to 85 residues: Small ribosomal subunit protein bS20 (85 aa).

This sequence belongs to the bacterial ribosomal protein bS20 family.

Functionally, binds directly to 16S ribosomal RNA. This is Small ribosomal subunit protein bS20 from Borrelia garinii subsp. bavariensis (strain ATCC BAA-2496 / DSM 23469 / PBi) (Borreliella bavariensis).